The primary structure comprises 308 residues: Cytochrome c biogenesis protein CcsA (308 aa).

Helical transmembrane passes span 2–22 (IVST…SILI), 44–64 (GMLI…IYLG), 71–91 (LSES…IGYF), 143–163 (MILG…LMVI), 212–232 (VISL…VWAN), 247–267 (WAFI…NINL), and 273–293 (AIVA…VNLV).

Belongs to the CcmF/CycK/Ccl1/NrfE/CcsA family. May interact with Ccs1.

The protein localises to the plastid membrane. Required during biogenesis of c-type cytochromes (cytochrome c6 and cytochrome f) at the step of heme attachment. This chain is Cytochrome c biogenesis protein CcsA, found in Cuscuta reflexa (Southern Asian dodder).